A 312-amino-acid chain; its full sequence is uncharacterized protein (312 aa).

An N-terminal signal peptide occupies residues 1-28 (MNSADTQEPKSFNHTDMWTAFGTTMSGA).

Functionally, the FAS-operon encodes genes involved in cytokinin production and in host plant fasciation (leafy gall). This is an uncharacterized protein from Rhodococcoides fascians (Rhodococcus fascians).